The following is a 201-amino-acid chain: Calcium channel flower (201 aa).

A run of 3 helical transmembrane segments spans residues 37 to 57, 59 to 79, and 103 to 120; these read LGIVGAFFAILFGLWNVLSII, LSVSCLVAGIIQMIAGFVVMA, and PMYFRAGLYCALAVPPIF.

The protein belongs to the calcium channel flower family. Homomultimer. Associates with the dally/ magu complex.

Its subcellular location is the cell membrane. The protein resides in the cytoplasmic vesicle. It is found in the secretory vesicle. It localises to the synaptic vesicle membrane. The protein localises to the presynaptic cell membrane. Its subcellular location is the endosome. Its activity is regulated as follows. Channel activity is inhibited by La(3+), which reduces Ca(2+) influx and thus inhibits it's function in promoting activity-dependent bulk endocytosis (ADBE) in response to high stimuli. In terms of biological role, transmembrane protein which mediates synaptic endocytosis, fitness-based cell culling, neuronal culling, morphogen gradient scaling, and calcium transport. Regulates synaptic endocytosis and hence couples exo- with endocytosis. Controls two major modes of synaptic vesicle (SV) endocytosis in the synaptic boutons of neuromuscular junctions (NMJs); Ca(2+) channel-independent Clathrin-mediated endocytosis (CME) in response to mild stimulation, and Ca(2+) channel-dependent activity-dependent bulk endocytosis (ADBE) in response to strong stimulation. Functions in ADBE and subsequent SV reformation from bulk endosomes by initiating Ca(2+) channel-dependent phosphatidylinositol 4,5-bisphosphate (PtdIns(4,5)P2) compartmentalization in synaptic boutons. There it acts at the periactive zone to provide the low Ca(2+) levels required to initiate Calcineurin activation and upregulate PtdIns(4,5)P2. Conversely PtdIns(4,5)P2 enhances fwe Ca(2+) channel-activity, establishing a positive feedback loop that induces PtdIns(4,5)P2 microdomain at the periactive zone. These microdomains trigger bulk membrane invagination (i.e. ADBE) by triggering actin polymerization while also promoting localization of fwe to bulk endosomes, thereby removing the ADBE trigger to reduce endocytosis and prevent excess membrane uptake. PtdIns(4,5)P2 then promotes SV reformation from the bulk endosomes, to coordinate ADBE and subsequent SV reformation. Different combinations of the flower isoforms at the cell membrane are also required for the identification and elimination of suboptimal or supernumerary cells during development, regeneration, and adulthood. Required for the recognition and elimination of unfit cells in the developing wing during cell competition. In the developing pupal retina, mediates the elimination of unwanted postmitotic neurons, including supernumerary photoreceptor neurons that form at the periphery of the retina and are contained within incomplete ommatidia units. Also required for efficient elimination and replacement of old neurons by newly generated neurons during regeneration in the adult brain following mechanical injury. Downstream of the flower fitness fingerprints, cells identified as unwanted or unfit are eliminated via apoptosis through the expression of ahuizotl (azot). However, the cells marked for elimination by the flower isoforms only undergo apoptosis if additional thresholds are met; (1) their neighboring fit/healthy cells express different levels of the fwe isoforms, and (2) the levels of the protective signal SPARC expressed by the loser or unwanted cells are unable to inhibit caspase activation. These additional thresholds for flower-mediated apoptosis, allows useful cells to recover from transient and limited stress before they are unnecessarily eliminated. Functions with dally and magu in a mechanism of scaling, which utilises apoptosis to ensure that the dpp morphogen gradient, which mediates organ growth, remains proportional to the size of the growing wing. In this mechanism, fwe represses dally- and Magu-dependent activity in expanding the gradient, and dally/Magu inhibits fwe-dependent apoptosis to keep cell death rate low. When the levels of these different proteins are optimally regulated the gradient correctly scales with organ growth but when this fails, fwe-mediated apoptosis is activated to trim the developing tissue to match the correct size of the gradient. This chain is Calcium channel flower, found in Drosophila willistoni (Fruit fly).